We begin with the raw amino-acid sequence, 360 residues long: MVCSSQLVPRIQGWARELGFSQIGVAGVDLSAAEPGLMQWLAEGFHGEMHYMAAHGLRRARPAELVPGTVSVITARMDYLPRTTPEGWQAVEFERLRRPQEAIVSVYARGRDYHKVLRARLQKLSDRIAEAVGPFGHRVFTDSAPVLEAELARRSGQGWRGKHTLVLSREAGSMFFLGEIYLDMALAPTEPVTAHCGSCQACMDVCPTQAIVAPHRVDARRCISYLTIEHAGPIPPALRPLMGNRIYGCDDCQLICPWNKFAQPSSLPDFDARAPLEGQQLAQLFAWDEAMFLRMTEGGPIRRIGHERWLRNIAVALGNALRATRDAGEAGALRAALATRANDASALVREHVAWALAQGI.

The active-site Proton donor is aspartate 142. Positions 187–216 (APTEPVTAHCGSCQACMDVCPTQAIVAPHR) constitute a 4Fe-4S ferredoxin-type domain. [4Fe-4S] cluster-binding residues include cysteine 196, cysteine 199, cysteine 202, cysteine 206, cysteine 222, cysteine 249, cysteine 252, and cysteine 256.

This sequence belongs to the QueG family. In terms of assembly, monomer. It depends on cob(II)alamin as a cofactor. The cofactor is [4Fe-4S] cluster.

The protein resides in the cytoplasm. It catalyses the reaction epoxyqueuosine(34) in tRNA + AH2 = queuosine(34) in tRNA + A + H2O. It participates in tRNA modification; tRNA-queuosine biosynthesis. Functionally, catalyzes the conversion of epoxyqueuosine (oQ) to queuosine (Q), which is a hypermodified base found in the wobble positions of tRNA(Asp), tRNA(Asn), tRNA(His) and tRNA(Tyr). The polypeptide is Epoxyqueuosine reductase (Alicycliphilus denitrificans (strain DSM 14773 / CIP 107495 / K601)).